Reading from the N-terminus, the 256-residue chain is Peroxisomal membrane protein PMP30A (256 aa).

Belongs to the peroxin-11 family.

The protein resides in the peroxisome membrane. In terms of biological role, involved in peroxisomal proliferation. Could participate in peroxisomal elongation or fission. May be involved in parceling of peroxisomes into regular quanta. The chain is Peroxisomal membrane protein PMP30A (PEX11A) from Candida boidinii (Yeast).